Here is a 520-residue protein sequence, read N- to C-terminus: Amine oxidase [flavin-containing] B (520 aa).

Over 1 to 489 the chain is Cytoplasmic; it reads MNSKCDVVVV…TFLERHLPSV (489 aa). Lys-52 carries the post-translational modification N6-acetyllysine. The residue at position 397 (Cys-397) is an S-8alpha-FAD cysteine. A helical; Anchor for type IV membrane protein transmembrane segment spans residues 490 to 516; that stretch reads PGLLRLIRLTTVVSAVALGFLAQKRGL. Topologically, residues 517 to 520 are mitochondrial intermembrane; that stretch reads LLRI.

The protein belongs to the flavin monoamine oxidase family. Monomer, homo- or heterodimer (containing two subunits of similar size). Each subunit contains a covalently bound flavin. Enzymatically active as monomer. FAD serves as cofactor.

The protein resides in the mitochondrion outer membrane. It catalyses the reaction a secondary aliphatic amine + O2 + H2O = a primary amine + an aldehyde + H2O2. The catalysed reaction is (R)-adrenaline + O2 + H2O = (R)-3,4-dihydroxymandelaldehyde + methylamine + H2O2. It carries out the reaction a primary methyl amine + O2 + H2O = an aldehyde + H2O2 + NH4(+). The enzyme catalyses benzylamine + O2 + H2O = benzaldehyde + H2O2 + NH4(+). It catalyses the reaction dopamine + O2 + H2O = 3,4-dihydroxyphenylacetaldehyde + H2O2 + NH4(+). The catalysed reaction is tyramine + O2 + H2O = (4-hydroxyphenyl)acetaldehyde + H2O2 + NH4(+). It carries out the reaction (R)-noradrenaline + O2 + H2O = (R)-3,4-dihydroxymandelaldehyde + H2O2 + NH4(+). The enzyme catalyses 2-phenylethylamine + O2 + H2O = 2-phenylacetaldehyde + H2O2 + NH4(+). It catalyses the reaction N-acetylputrescine + O2 + H2O = 4-acetamidobutanal + H2O2 + NH4(+). Catalyzes the oxidative deamination of primary and some secondary amines such as neurotransmitters, and exogenous amines including the tertiary amine, neurotoxin 1-methyl-4-phenyl-1,2,3,6-tetrahydropyridine (MPTP), with concomitant reduction of oxygen to hydrogen peroxide and participates in the metabolism of neuroactive and vasoactive amines in the central nervous system and peripheral tissues. Preferentially degrades benzylamine and phenylethylamine. The chain is Amine oxidase [flavin-containing] B from Cavia porcellus (Guinea pig).